Reading from the N-terminus, the 303-residue chain is N-acetyl-D-glucosamine kinase (303 aa).

Residues 4 to 11 (GFDIGGTK) and 133 to 140 (GVGGGLVL) contribute to the ATP site. Residues H157, C177, C179, and C184 each contribute to the Zn(2+) site.

Belongs to the ROK (NagC/XylR) family. NagK subfamily.

The enzyme catalyses N-acetyl-D-glucosamine + ATP = N-acetyl-D-glucosamine 6-phosphate + ADP + H(+). The protein operates within cell wall biogenesis; peptidoglycan recycling. Functionally, catalyzes the phosphorylation of N-acetyl-D-glucosamine (GlcNAc) derived from cell-wall degradation, yielding GlcNAc-6-P. This Salmonella newport (strain SL254) protein is N-acetyl-D-glucosamine kinase.